A 103-amino-acid chain; its full sequence is OMEGA-ectatommitoxin(02)-Rm1d (103 aa).

The signal sequence occupies residues 1 to 30; that stretch reads MKDSYISIVIAYLMVTFILVSSMPIEGEKR. Disulfide bonds link Cys-39–Cys-54, Cys-49–Cys-70, and Cys-72–Cys-81. An EGF-like domain is found at 43–82; sequence LNDENYCFNGKCVHLVAQDEPGKPYYSCICDEFYIGERCG.

This sequence belongs to the EGF domain peptide family. In terms of tissue distribution, expressed by the venom gland.

Its subcellular location is the secreted. Its function is as follows. Ant peptide with probable defensive activity which acts as a potent agonist of the mammalian epidermal growth factor receptor (EGFR). Mimics, both structurally and functionally, vertebrate epidermal growth factor (EGF) peptide hormones. In vivo, intraplantar injection in mice causes long-lasting (several days) hypersensitivity of the injected paw to both mechanical and thermal stimuli. Its long-lasting effect is unusual for venom toxins whose effects are usually immediate. One possible explanation is that it would reduce the duration of a nest attack, discourage future attacks, or enhance the actions of subsequent exposure to other pain-inducing venom peptides. The sequence is that of OMEGA-ectatommitoxin(02)-Rm1d from Rhytidoponera metallica (Australian green-headed ant).